The sequence spans 174 residues: RNA pyrophosphohydrolase (174 aa).

A Nudix hydrolase domain is found at 14-167 (PYRPCVGLMV…KRKVYEEVVA (154 aa)). Positions 55-76 (GGIDKGEEPLEAAIRELYEETG) match the Nudix box motif.

The protein belongs to the Nudix hydrolase family. RppH subfamily. The cofactor is a divalent metal cation.

In terms of biological role, accelerates the degradation of transcripts by removing pyrophosphate from the 5'-end of triphosphorylated RNA, leading to a more labile monophosphorylated state that can stimulate subsequent ribonuclease cleavage. The sequence is that of RNA pyrophosphohydrolase from Brucella anthropi (strain ATCC 49188 / DSM 6882 / CCUG 24695 / JCM 21032 / LMG 3331 / NBRC 15819 / NCTC 12168 / Alc 37) (Ochrobactrum anthropi).